Here is a 153-residue protein sequence, read N- to C-terminus: LOB domain-containing protein 26 (153 aa).

One can recognise an LOB domain in the interval 4–105; it reads NPCEVCRFQN…EEVSKTKKLL (102 aa). Positions 126-153 are disordered; it reads KSKPSVLRKRKRKTKSSDESAIRVVEDS. Positions 140–153 are enriched in basic and acidic residues; the sequence is KSSDESAIRVVEDS.

It belongs to the LOB domain-containing protein family.

The sequence is that of LOB domain-containing protein 26 (LBD26) from Arabidopsis thaliana (Mouse-ear cress).